The primary structure comprises 132 residues: ATP synthase epsilon chain (132 aa).

This sequence belongs to the ATPase epsilon chain family. F-type ATPases have 2 components, CF(1) - the catalytic core - and CF(0) - the membrane proton channel. CF(1) has five subunits: alpha(3), beta(3), gamma(1), delta(1), epsilon(1). CF(0) has three main subunits: a, b and c.

It localises to the cell membrane. Its function is as follows. Produces ATP from ADP in the presence of a proton gradient across the membrane. The protein is ATP synthase epsilon chain (atpC) of Geobacillus stearothermophilus (Bacillus stearothermophilus).